The following is a 689-amino-acid chain: Calcium-responsive transcription factor (689 aa).

Disordered regions lie at residues 1-46 (MEQR…PTIL) and 541-609 (SPDG…SVPN). Residues 13–29 (DGEKSEREAQGFEHRTC) are compositionally biased toward basic and acidic residues. Composition is skewed to polar residues over residues 541-559 (SPDG…SSSP) and 578-601 (LGQS…SSTG).

In terms of tissue distribution, highly expressed in brain and testis.

Its subcellular location is the nucleus. Functionally, acts as a transcriptional activator that mediates the calcium- and neuron-selective induction of BDNF exon III transcription. Binds to the consensus calcium-response element CaRE1 5'-CTATTTCGAG-3' sequence. The polypeptide is Calcium-responsive transcription factor (Carf) (Mus musculus (Mouse)).